The primary structure comprises 230 residues: uncharacterized protein (230 aa).

This is an uncharacterized protein from Dictyostelium discoideum (Social amoeba).